Here is a 638-residue protein sequence, read N- to C-terminus: MSRPLTPLLDCVLSPLDLRALPASDLARLADELRAEMIDVVSVTGGHLGAGLGVVELTIALHYIFNTPDDRIIWDVGHQAYPHKILTGRRDKIRTLRQEGGLSGFTKRSESIYDPFGAGHSSTSISAGLGMAMASALKAEERRNVIAVIGDGAMSAGMAYEAMNNAGALDARLIVILNDNDMSIAPPTGAMSAHLARLVSRPSYRHLRERIKLFSKKFPKFFSEQASRSEEFARGFLVGGTLFDELGFYYVGPIDGHNFEHLLPVLKNVRAYPNGPVLVHVVTHKGKGYAPAEESADKYHGVNRFDVVTGKQVKAQSTRLSYTKVFSKALIEEATHDHKIVAITAAMPTGTGLDSFAEKFSDRMFDVGIAEQHAVTFAAGIACEGYKPFVAIYSTFLQRAYDQIIHDVSIQKLPVRFAIDRAGFVGADGATHAGSFDIVFLATLPEFVVMAPSDEVELMHMVRTAAVYDQGPISFRYPRGEGIGMDLPQRGEVLEIGKGRVLREGSRVALVCFGTQLSEVLVAADELAAEGISTTVADARFAKPLDKDLMRRLAREHEVFITIEEGAIGGFGAHVLQFLAQEALLEHGLKVRTLRLPDEYLNHGSPEKILSRVGLDAKGIINAVFTSLGYETRKTLQI.

Thiamine diphosphate contacts are provided by residues His78 and Gly119 to Ser121. Asp151 provides a ligand contact to Mg(2+). Thiamine diphosphate contacts are provided by residues Gly152–Ala153, Asn180, Tyr289, and Glu371. A Mg(2+)-binding site is contributed by Asn180.

The protein belongs to the transketolase family. DXPS subfamily. As to quaternary structure, homodimer. The cofactor is Mg(2+). Thiamine diphosphate serves as cofactor.

The enzyme catalyses D-glyceraldehyde 3-phosphate + pyruvate + H(+) = 1-deoxy-D-xylulose 5-phosphate + CO2. Its pathway is metabolic intermediate biosynthesis; 1-deoxy-D-xylulose 5-phosphate biosynthesis; 1-deoxy-D-xylulose 5-phosphate from D-glyceraldehyde 3-phosphate and pyruvate: step 1/1. Its function is as follows. Catalyzes the acyloin condensation reaction between C atoms 2 and 3 of pyruvate and glyceraldehyde 3-phosphate to yield 1-deoxy-D-xylulose-5-phosphate (DXP). The chain is 1-deoxy-D-xylulose-5-phosphate synthase from Bartonella bacilliformis (strain ATCC 35685 / KC583 / Herrer 020/F12,63).